The primary structure comprises 251 residues: 1-(5-phosphoribosyl)-5-[(5-phosphoribosylamino)methylideneamino] imidazole-4-carboxamide isomerase (251 aa).

The active-site Proton acceptor is the Asp8. The Proton donor role is filled by Asp131.

The protein belongs to the HisA/HisF family.

The protein resides in the cytoplasm. The enzyme catalyses 1-(5-phospho-beta-D-ribosyl)-5-[(5-phospho-beta-D-ribosylamino)methylideneamino]imidazole-4-carboxamide = 5-[(5-phospho-1-deoxy-D-ribulos-1-ylimino)methylamino]-1-(5-phospho-beta-D-ribosyl)imidazole-4-carboxamide. The protein operates within amino-acid biosynthesis; L-histidine biosynthesis; L-histidine from 5-phospho-alpha-D-ribose 1-diphosphate: step 4/9. In Burkholderia cenocepacia (strain ATCC BAA-245 / DSM 16553 / LMG 16656 / NCTC 13227 / J2315 / CF5610) (Burkholderia cepacia (strain J2315)), this protein is 1-(5-phosphoribosyl)-5-[(5-phosphoribosylamino)methylideneamino] imidazole-4-carboxamide isomerase.